Reading from the N-terminus, the 73-residue chain is UPF0352 protein HD_1515 (73 aa).

Belongs to the UPF0352 family.

The chain is UPF0352 protein HD_1515 from Haemophilus ducreyi (strain 35000HP / ATCC 700724).